Consider the following 867-residue polypeptide: Elongation factor 2 (867 aa).

Residues 17 to 368 (HNIRNLSVVA…MIVLHLPSPV (352 aa)) enclose the tr-type G domain. Residue 26–33 (AHVDHGKS) participates in GTP binding. Residues T57 and T59 each carry the phosphothreonine modification. GTP-binding positions include 176 to 179 (NKLD) and 231 to 233 (SGL). H723 is modified (diphthamide).

It belongs to the TRAFAC class translation factor GTPase superfamily. Classic translation factor GTPase family. EF-G/EF-2 subfamily. Phosphorylation by EF-2 kinase completely inactivates EF-2.

Its subcellular location is the cytoplasm. The enzyme catalyses GTP + H2O = GDP + phosphate + H(+). Catalyzes the GTP-dependent ribosomal translocation step during translation elongation. During this step, the ribosome changes from the pre-translocational (PRE) to the post-translocational (POST) state as the newly formed A-site-bound peptidyl-tRNA and P-site-bound deacylated tRNA move to the P and E sites, respectively. Catalyzes the coordinated movement of the two tRNA molecules, the mRNA and conformational changes in the ribosome. This chain is Elongation factor 2, found in Blastocystis hominis.